We begin with the raw amino-acid sequence, 229 residues long: DNA mismatch repair protein MutH (229 aa).

Belongs to the MutH family.

The protein localises to the cytoplasm. In terms of biological role, sequence-specific endonuclease that cleaves unmethylated GATC sequences. It is involved in DNA mismatch repair. This is DNA mismatch repair protein MutH from Escherichia coli O45:K1 (strain S88 / ExPEC).